A 203-amino-acid chain; its full sequence is LexA repressor 2 (203 aa).

The H-T-H motif DNA-binding region spans 28–48 (MREIARHLNVNGTLGVAKHLE). Residues Ser-122 and Lys-159 each act as for autocatalytic cleavage activity in the active site.

This sequence belongs to the peptidase S24 family. As to quaternary structure, homodimer.

It carries out the reaction Hydrolysis of Ala-|-Gly bond in repressor LexA.. Its function is as follows. Represses a number of genes involved in the response to DNA damage (SOS response), including recA and lexA. In the presence of single-stranded DNA, RecA interacts with LexA causing an autocatalytic cleavage which disrupts the DNA-binding part of LexA, leading to derepression of the SOS regulon and eventually DNA repair. This chain is LexA repressor 2, found in Geobacter sulfurreducens (strain ATCC 51573 / DSM 12127 / PCA).